A 67-amino-acid polypeptide reads, in one-letter code: UPF0337 protein BCE_3655 (67 aa).

It belongs to the UPF0337 (CsbD) family.

In Bacillus cereus (strain ATCC 10987 / NRS 248), this protein is UPF0337 protein BCE_3655.